The primary structure comprises 188 residues: dCTP deaminase (188 aa).

DCTP-binding positions include 111-116 (KSTYAR), 135-137 (TLE), Q156, Y170, and Q180. E137 serves as the catalytic Proton donor/acceptor.

This sequence belongs to the dCTP deaminase family. As to quaternary structure, homotrimer.

The enzyme catalyses dCTP + H2O + H(+) = dUTP + NH4(+). Its pathway is pyrimidine metabolism; dUMP biosynthesis; dUMP from dCTP (dUTP route): step 1/2. Functionally, catalyzes the deamination of dCTP to dUTP. This is dCTP deaminase from Dechloromonas aromatica (strain RCB).